The primary structure comprises 447 residues: Signal recognition particle 54 kDa protein (447 aa).

GTP is bound by residues 108–115 (GLYGMGKT), 188–192 (DTAGR), and 246–249 (TKLD).

Belongs to the GTP-binding SRP family. SRP54 subfamily. In terms of assembly, part of the signal recognition particle protein translocation system, which is composed of SRP and FtsY. Archaeal SRP consists of a 7S RNA molecule of 300 nucleotides and two protein subunits: SRP54 and SRP19.

Its subcellular location is the cytoplasm. It carries out the reaction GTP + H2O = GDP + phosphate + H(+). Its function is as follows. Involved in targeting and insertion of nascent membrane proteins into the cytoplasmic membrane. Binds to the hydrophobic signal sequence of the ribosome-nascent chain (RNC) as it emerges from the ribosomes. The SRP-RNC complex is then targeted to the cytoplasmic membrane where it interacts with the SRP receptor FtsY. This is Signal recognition particle 54 kDa protein from Methanopyrus kandleri (strain AV19 / DSM 6324 / JCM 9639 / NBRC 100938).